We begin with the raw amino-acid sequence, 523 residues long: Bifunctional purine biosynthesis protein PurH (523 aa).

An MGS-like domain is found at 1–154 (MTATAGSNKR…KNHPSVAVVT (154 aa)).

This sequence belongs to the PurH family.

It carries out the reaction (6R)-10-formyltetrahydrofolate + 5-amino-1-(5-phospho-beta-D-ribosyl)imidazole-4-carboxamide = 5-formamido-1-(5-phospho-D-ribosyl)imidazole-4-carboxamide + (6S)-5,6,7,8-tetrahydrofolate. The enzyme catalyses IMP + H2O = 5-formamido-1-(5-phospho-D-ribosyl)imidazole-4-carboxamide. It functions in the pathway purine metabolism; IMP biosynthesis via de novo pathway; 5-formamido-1-(5-phospho-D-ribosyl)imidazole-4-carboxamide from 5-amino-1-(5-phospho-D-ribosyl)imidazole-4-carboxamide (10-formyl THF route): step 1/1. It participates in purine metabolism; IMP biosynthesis via de novo pathway; IMP from 5-formamido-1-(5-phospho-D-ribosyl)imidazole-4-carboxamide: step 1/1. In Streptomyces coelicolor (strain ATCC BAA-471 / A3(2) / M145), this protein is Bifunctional purine biosynthesis protein PurH.